The sequence spans 266 residues: Gasdermin bGSDM (266 aa).

Cysteine 6 carries the S-palmitoyl cysteine lipid modification. The next 4 beta stranded transmembrane spans lie at 70-86 (ISHS…AGNF), 99-117 (APKL…FSFS), 163-180 (AIDM…DVQA), and 189-205 (LGGK…TISF). The tract at residues 245–266 (GAAEPYLLRRGQVLIVEDMQAT) is C-terminal region.

It belongs to the bacterial gasdermin family. In terms of assembly, monomer. As to quaternary structure, forms large, homooligomeric ring-shaped pores when inserted in membranes. In terms of processing, cleavage by the adjacently encoded protease (probably ISF6_0256) predicted to occur between Glu-244 and Gly-245 relieves autoinhibition, releasing the N-terminus which initiates loss of cell integrity. Post-translationally, palmitoylation helps stabilize the inactive state; may self palmitoylate. Palmitoylation plays a significant role in pore formation.

The protein resides in the cytoplasm. It is found in the cell inner membrane. Its activity is regulated as follows. The full-length protein before cleavage is inactive: intramolecular interactions between the N-terminal domain and the C-terminal region as well as the lipid modification, mediate autoinhibition. The pyroptosis-like-inducing activity is carried by the released N-terminal domain (Gasdermin bGSDM, N-terminus). Precursor of a pore-forming protein involved in defense against bacteriophages. Cleavage of this precursor by its dedicated, neighboring protease (probably ISF6_0256) releases the active moiety (gasdermin bGSDM, N-terminus) which inserts into membranes, forming pores and triggering cell death. In terms of biological role, pore-forming protein that causes membrane permeabilization via a pyroptosis-like activity. Makes ring-like pores with an interior pore diameter of 300-400 Angstroms, when integrated in liposomes. In Piscinibacter sakaiensis (Ideonella sakaiensis), this protein is Gasdermin bGSDM.